The chain runs to 139 residues: Histone H2AX (139 aa).

Positions 1–24 (MSSTATTKGGRGKPKASKSVSRSS) are disordered. The residue at position 136 (Ser-136) is a Phosphoserine; by ATM and ATR. Residues 136-137 (SQ) carry the [ST]-Q motif motif.

The protein belongs to the histone H2A family. As to quaternary structure, the nucleosome is a histone octamer containing two molecules each of H2A, H2B, H3 and H4 assembled in one H3-H4 heterotetramer and two H2A-H2B heterodimers. The octamer wraps approximately 147 bp of DNA. Interacts with numerous proteins required for DNA damage signaling and repair when phosphorylated on Ser-136. In terms of processing, phosphorylated on Ser-136 (to form gamma-H2AX) in response to DNA double strand breaks (DSBs) generated by exogenous genotoxic agents and by stalled replication forks, and may also occur during meiotic recombination events. Phosphorylation can extend up to several thousand nucleosomes from the actual site of the DSB and may mark the surrounding chromatin for recruitment of proteins required for DNA damage signaling and repair. Widespread phosphorylation may also serve to amplify the damage signal or aid repair of persistent lesions. Phosphorylation of Ser-136 in response to ionizing radiation is mediated by ATM while defects in DNA replication induce Ser-136 phosphorylation subsequent to activation of ATR. Dephosphorylation of Ser-136 by PP2A is required for DNA DSB repair.

The protein localises to the nucleus. The protein resides in the chromosome. Its function is as follows. Variant histone H2A which replaces conventional H2A in a subset of nucleosomes. Nucleosomes wrap and compact DNA into chromatin, limiting DNA accessibility to the cellular machineries which require DNA as a template. Histones thereby play a central role in transcription regulation, DNA repair, DNA replication and chromosomal stability. DNA accessibility is regulated via a complex set of post-translational modifications of histones, also called histone code, and nucleosome remodeling. Required for checkpoint-mediated arrest of cell cycle progression in response to low doses of ionizing radiation and for efficient repair of DNA double strand breaks (DSBs) specifically when modified by C-terminal phosphorylation. The polypeptide is Histone H2AX (HIS2A) (Cicer arietinum (Chickpea)).